A 432-amino-acid chain; its full sequence is Adenylosuccinate synthetase (432 aa).

Residues 12–18 (GDEGKGK) and 40–42 (GHT) contribute to the GTP site. Asp13 functions as the Proton acceptor in the catalytic mechanism. Mg(2+) contacts are provided by Asp13 and Gly40. IMP-binding positions include 13 to 16 (DEGK), 38 to 41 (NAGH), Thr129, Arg143, Gln224, Thr239, and Arg303. His41 functions as the Proton donor in the catalytic mechanism. 299–305 (VTTGRRR) is a substrate binding site. GTP-binding positions include Arg305, 331–333 (KLD), and 413–415 (GVG).

Belongs to the adenylosuccinate synthetase family. In terms of assembly, homodimer. Requires Mg(2+) as cofactor.

The protein resides in the cytoplasm. The enzyme catalyses IMP + L-aspartate + GTP = N(6)-(1,2-dicarboxyethyl)-AMP + GDP + phosphate + 2 H(+). It participates in purine metabolism; AMP biosynthesis via de novo pathway; AMP from IMP: step 1/2. In terms of biological role, plays an important role in the de novo pathway of purine nucleotide biosynthesis. Catalyzes the first committed step in the biosynthesis of AMP from IMP. The protein is Adenylosuccinate synthetase of Mycobacterium avium (strain 104).